The sequence spans 410 residues: Elongation factor Tu, chloroplastic (410 aa).

Positions 10-215 (KPHINIGTIG…MVDKYFPTPE (206 aa)) constitute a tr-type G domain. The interval 19 to 26 (GHVDHGKT) is G1. A GTP-binding site is contributed by 19–26 (GHVDHGKT). T26 is a Mg(2+) binding site. Residues 61 to 65 (GITIN) are G2. Residues 82 to 85 (DCPG) are G3. Residues 82–86 (DCPGH) and 137–140 (NKAD) each bind GTP. A G4 region spans residues 137–140 (NKAD). The G5 stretch occupies residues 175–177 (SAL).

The protein belongs to the TRAFAC class translation factor GTPase superfamily. Classic translation factor GTPase family. EF-Tu/EF-1A subfamily.

The protein resides in the plastid. It localises to the chloroplast. The enzyme catalyses GTP + H2O = GDP + phosphate + H(+). GTP hydrolase that promotes the GTP-dependent binding of aminoacyl-tRNA to the A-site of ribosomes during protein biosynthesis. This Cyanidium caldarium (Red alga) protein is Elongation factor Tu, chloroplastic (tufA).